Consider the following 139-residue polypeptide: Nucleoside diphosphate kinase (139 aa).

ATP-binding residues include K9, F57, R85, T91, R102, and N112. H115 acts as the Pros-phosphohistidine intermediate in catalysis.

It belongs to the NDK family. As to quaternary structure, homotetramer. Mg(2+) serves as cofactor.

It is found in the cytoplasm. It catalyses the reaction a 2'-deoxyribonucleoside 5'-diphosphate + ATP = a 2'-deoxyribonucleoside 5'-triphosphate + ADP. The catalysed reaction is a ribonucleoside 5'-diphosphate + ATP = a ribonucleoside 5'-triphosphate + ADP. In terms of biological role, major role in the synthesis of nucleoside triphosphates other than ATP. The ATP gamma phosphate is transferred to the NDP beta phosphate via a ping-pong mechanism, using a phosphorylated active-site intermediate. The chain is Nucleoside diphosphate kinase from Neorickettsia sennetsu (strain ATCC VR-367 / Miyayama) (Ehrlichia sennetsu).